The following is a 1169-amino-acid chain: Protein MBD-R2 (1169 aa).

The THAP-type zinc finger occupies 5–59; it reads CCVANCPSTSRLLEHNGVTYHSFPLDPIIRAIWIKNSRISLERQITKSVLVCSRH. 3 disordered regions span residues 99-122, 140-211, and 347-394; these read RALQ…STND, SAER…KYSN, and AEEG…CAPQ. Residues 107–122 are compositionally biased toward polar residues; the sequence is EGTTETPGNAQSSTND. Positions 140–160 are enriched in basic and acidic residues; it reads SAERKATEEGKTGKAADDVKN. Positions 190-202 are enriched in low complexity; sequence PAPGSASSSNSPL. Residues 353–363 are compositionally biased toward polar residues; sequence KSPTPVGTPVS. An MBD domain is found at 445 to 514; it reads KPTVIVQDWR…DVYDFSIHRR (70 aa). The segment at 527–565 is disordered; it reads GYNPQPPPKPRPMDVSMNSTLDQSITSQHSLPSTPMPVK. Polar residues predominate over residues 542-559; it reads SMNSTLDQSITSQHSLPS. The C2H2-type zinc finger occupies 640–665; the sequence is YVCPREDCAKTYRKEDFLLIHIRHYH. Residues 714–890 are disordered; it reads QDLQQSRSFK…INAALAPPPA (177 aa). Low complexity predominate over residues 726–742; sequence SVSATATSSTPSDITPT. Polar residues predominate over residues 774–784; sequence PTQSFNPSLSR. The segment covering 798 to 810 has biased composition (basic residues); the sequence is SGSRKSNRQRSQR. Polar residues-rich tracts occupy residues 853-862 and 869-881; these read AATTPISSID and SVST…QTDI.

In terms of assembly, component of the non-specific lethal (NLS) histone acetyltransferase complex at least composed of mof, nls1, dgt1/NSL2, Rcd1/NSL3, Rcd5/MCRS2, MBD-R2 and wds.

Its subcellular location is the nucleus. The protein localises to the chromosome. Component of the non-specific lethal (NLS) complex, a multiprotein complex that promotes expression of housekeeping genes on X chromosome and autosomes. The chain is Protein MBD-R2 from Drosophila melanogaster (Fruit fly).